We begin with the raw amino-acid sequence, 417 residues long: Serine hydroxymethyltransferase (417 aa).

Residues Leu121 and 125–127 (GHL) contribute to the (6S)-5,6,7,8-tetrahydrofolate site. Lys229 is subject to N6-(pyridoxal phosphate)lysine. 355-357 (SPF) lines the (6S)-5,6,7,8-tetrahydrofolate pocket.

This sequence belongs to the SHMT family. In terms of assembly, homodimer. Pyridoxal 5'-phosphate is required as a cofactor.

It is found in the cytoplasm. It carries out the reaction (6R)-5,10-methylene-5,6,7,8-tetrahydrofolate + glycine + H2O = (6S)-5,6,7,8-tetrahydrofolate + L-serine. Its pathway is one-carbon metabolism; tetrahydrofolate interconversion. The protein operates within amino-acid biosynthesis; glycine biosynthesis; glycine from L-serine: step 1/1. Functionally, catalyzes the reversible interconversion of serine and glycine with tetrahydrofolate (THF) serving as the one-carbon carrier. This reaction serves as the major source of one-carbon groups required for the biosynthesis of purines, thymidylate, methionine, and other important biomolecules. Also exhibits THF-independent aldolase activity toward beta-hydroxyamino acids, producing glycine and aldehydes, via a retro-aldol mechanism. The chain is Serine hydroxymethyltransferase from Sodalis glossinidius (strain morsitans).